Reading from the N-terminus, the 199-residue chain is Protein p2 (199 aa).

It is found in the host cytoplasm. The chain is Protein p2 from Avena sativa (Oat).